We begin with the raw amino-acid sequence, 313 residues long: MPIRIPDQLPASDVLRTENIFVMSESRAASQEIRPLRVLILNLMPKKIETETQFLRLLSNSPLQVNVELLRIDNRPSKNTPTEHLDTFYRQFEMVKGKNFDGLIITGAPLGLVQFEDVIYWDHLKTIMEWAKHHVTSTLYVCWAAQAGLKLLYNLPKKTRKEKLSGVYHHKIHHQYHPLLRGFDDTFLAPHSRYADFSPEFLEEHTDLDILATSDVAGTYLATTKDKRNVFVTGHPEYDSHTLHNEYIRDLGEGMEPAIPINYYPNNNPDNPPCASWRSHGHLLFSNWLNYCVYQQTPYDLDHFSEDAFTKDD.

Catalysis depends on cysteine 142, which acts as the Acyl-thioester intermediate. Residues lysine 163 and serine 192 each contribute to the substrate site. The Proton acceptor role is filled by histidine 235. Residue glutamate 237 is part of the active site. Position 249 (arginine 249) interacts with substrate.

This sequence belongs to the MetA family.

The protein localises to the cytoplasm. The catalysed reaction is L-homoserine + succinyl-CoA = O-succinyl-L-homoserine + CoA. Its pathway is amino-acid biosynthesis; L-methionine biosynthesis via de novo pathway; O-succinyl-L-homoserine from L-homoserine: step 1/1. Its function is as follows. Transfers a succinyl group from succinyl-CoA to L-homoserine, forming succinyl-L-homoserine. The polypeptide is Homoserine O-succinyltransferase (Vibrio campbellii (strain ATCC BAA-1116)).